We begin with the raw amino-acid sequence, 277 residues long: RsbT co-antagonist protein RsbRB (277 aa).

The region spanning 165-276 is the STAS domain; sequence SSPVITLSKS…TNLAQALNYH (112 aa). Thr-186 bears the Phosphothreonine mark.

Interacts with RsbRA and RsbS in the stressosome. The stressosome probably also contains RsbRC and RsbRD. Post-translationally, phosphorylated by RsbT.

In terms of biological role, one of 4 functionally non-identical RsbR paralogs, it functions in the environmental signaling branch of the general stress response. Its function is as follows. Negative regulator of sigma-B activity. Non-phosphorylated RsbS binds to RsbT, preventing its association with RsbU. Requires any one of RsbRA, RsbRB, RsbRC or RsbRD to sequester RsbT. When RsbS and the RsbR paralog(s) are phosphorylated, they release RsbT, which can then bind and activate RsbU. In Bacillus subtilis (strain 168), this protein is RsbT co-antagonist protein RsbRB (rsbRB).